A 920-amino-acid chain; its full sequence is Isoleucine--tRNA ligase (920 aa).

The 'HIGH' region signature appears at 58-68 (PYANGHLHLGH). Position 569 (E569) interacts with L-isoleucyl-5'-AMP. The 'KMSKS' region signature appears at 610 to 614 (KMSKS). K613 contacts ATP. Residues C895, C898, C910, and C913 each coordinate Zn(2+).

The protein belongs to the class-I aminoacyl-tRNA synthetase family. IleS type 1 subfamily. In terms of assembly, monomer. Requires Zn(2+) as cofactor.

It is found in the cytoplasm. The enzyme catalyses tRNA(Ile) + L-isoleucine + ATP = L-isoleucyl-tRNA(Ile) + AMP + diphosphate. In terms of biological role, catalyzes the attachment of isoleucine to tRNA(Ile). As IleRS can inadvertently accommodate and process structurally similar amino acids such as valine, to avoid such errors it has two additional distinct tRNA(Ile)-dependent editing activities. One activity is designated as 'pretransfer' editing and involves the hydrolysis of activated Val-AMP. The other activity is designated 'posttransfer' editing and involves deacylation of mischarged Val-tRNA(Ile). The protein is Isoleucine--tRNA ligase of Helicobacter pylori (strain HPAG1).